Reading from the N-terminus, the 121-residue chain is Small ribosomal subunit protein uS13 (121 aa).

A disordered region spans residues 91–121 (HRRGLPVRGQNSKNNARTRKGPRRTVANKKK). Residues 106–121 (ARTRKGPRRTVANKKK) show a composition bias toward basic residues.

It belongs to the universal ribosomal protein uS13 family. Part of the 30S ribosomal subunit. Forms a loose heterodimer with protein S19. Forms two bridges to the 50S subunit in the 70S ribosome.

Located at the top of the head of the 30S subunit, it contacts several helices of the 16S rRNA. In the 70S ribosome it contacts the 23S rRNA (bridge B1a) and protein L5 of the 50S subunit (bridge B1b), connecting the 2 subunits; these bridges are implicated in subunit movement. Contacts the tRNAs in the A and P-sites. This is Small ribosomal subunit protein uS13 from Bacillus mycoides (strain KBAB4) (Bacillus weihenstephanensis).